Here is a 189-residue protein sequence, read N- to C-terminus: Copper transport protein CTR2 (189 aa).

The Cytoplasmic segment spans residues 1-81; it reads MDDKKTWSTV…VVFEWWHIKT (81 aa). Residues 82 to 102 form a helical membrane-spanning segment; that stretch reads LPGLILSCLAIFGLAYLYEYL. At 103-142 the chain is on the vacuolar side; the sequence is KYCVHKRQLSQRVLLPNRSLTKINQADKVSNSILYGLQVG. The helical transmembrane segment at 143–163 threads the bilayer; that stretch reads FSFMLMLVFMTYNGWLMLAVV. Over 164–189 the chain is Cytoplasmic; sequence CGAIWGNYSWCTSYSPEIDDSSLACH.

The protein belongs to the copper transporter (Ctr) (TC 1.A.56) family. SLC31A subfamily. In terms of assembly, homomultimer.

It localises to the vacuole membrane. Functionally, provides bioavailable copper via mobilization of vacuolar copper stores and export to the cytoplasm. The chain is Copper transport protein CTR2 (CTR2) from Saccharomyces cerevisiae (strain ATCC 204508 / S288c) (Baker's yeast).